The primary structure comprises 160 residues: Putative tRNA (cytidine(34)-2'-O)-methyltransferase (160 aa).

4 residues coordinate S-adenosyl-L-methionine: Ile-82, Gly-107, Leu-128, and Ser-136.

This sequence belongs to the class IV-like SAM-binding methyltransferase superfamily. RNA methyltransferase TrmH family. TrmL subfamily.

It localises to the cytoplasm. It catalyses the reaction cytidine(34) in tRNA + S-adenosyl-L-methionine = 2'-O-methylcytidine(34) in tRNA + S-adenosyl-L-homocysteine + H(+). The catalysed reaction is 5-carboxymethylaminomethyluridine(34) in tRNA(Leu) + S-adenosyl-L-methionine = 5-carboxymethylaminomethyl-2'-O-methyluridine(34) in tRNA(Leu) + S-adenosyl-L-homocysteine + H(+). In terms of biological role, could methylate the ribose at the nucleotide 34 wobble position in tRNA. This Bacillus subtilis (strain 168) protein is Putative tRNA (cytidine(34)-2'-O)-methyltransferase (cspR).